We begin with the raw amino-acid sequence, 59 residues long: MAEVRVGKNESLDSALRRFKRSCQKAGLMAEMRKREHYEKPSVRRKKKAQARNKKKRYA.

Residues 27-59 (GLMAEMRKREHYEKPSVRRKKKAQARNKKKRYA) are disordered. The span at 31–42 (EMRKREHYEKPS) shows a compositional bias: basic and acidic residues. The span at 43-59 (VRRKKKAQARNKKKRYA) shows a compositional bias: basic residues.

This sequence belongs to the bacterial ribosomal protein bS21 family.

The protein is Small ribosomal subunit protein bS21 of Carboxydothermus hydrogenoformans (strain ATCC BAA-161 / DSM 6008 / Z-2901).